The chain runs to 312 residues: Ribonuclease HIII (312 aa).

Residues 95–311 form the RNase H type-2 domain; sequence FNCIGSDEAG…REKAQKILKP (217 aa). Positions 101, 102, and 206 each coordinate a divalent metal cation.

The protein belongs to the RNase HII family. RnhC subfamily. Mn(2+) serves as cofactor. It depends on Mg(2+) as a cofactor.

It is found in the cytoplasm. It carries out the reaction Endonucleolytic cleavage to 5'-phosphomonoester.. In terms of biological role, endonuclease that specifically degrades the RNA of RNA-DNA hybrids. The chain is Ribonuclease HIII from Staphylococcus aureus (strain MW2).